Consider the following 218-residue polypeptide: YlmG homolog protein 1-2, chloroplastic (218 aa).

The N-terminal 83 residues, 1 to 83 (MASFTTNSLA…TRSITTLVLL (83 aa)), are a transit peptide targeting the chloroplast. The next 2 helical transmembrane spans lie at 133-153 (LTVV…VLMV) and 187-207 (IIPP…AVLG).

It belongs to the YggT family.

It is found in the plastid. The protein resides in the chloroplast thylakoid membrane. Its function is as follows. Not required for the biogenesis and accumulation of native cytochrome b6 in the thylakoid membrane. Not functionally involved in the pathway for covalent binding of the c-type heme to cytochrome b6. This chain is YlmG homolog protein 1-2, chloroplastic, found in Arabidopsis thaliana (Mouse-ear cress).